A 238-amino-acid polypeptide reads, in one-letter code: Ribosomal RNA small subunit methyltransferase G (238 aa).

S-adenosyl-L-methionine is bound by residues G77, F82, 128-129 (AE), and R147. Residues 219–238 (KKTPARYPRKPGTPNKQPIQ) form a disordered region.

This sequence belongs to the methyltransferase superfamily. RNA methyltransferase RsmG family.

It localises to the cytoplasm. Specifically methylates the N7 position of guanine in position 535 of 16S rRNA. The sequence is that of Ribosomal RNA small subunit methyltransferase G from Geobacillus thermodenitrificans (strain NG80-2).